We begin with the raw amino-acid sequence, 76 residues long: Monocarboxylate transporter 1 (76 aa).

A run of 3 helical transmembrane segments spans residues 1–18, 28–48, and 53–73; these read LSIL…MGLA, IQYF…LAPL, and IGFC…SSVL. Asp8 is a H(+) binding site. (S)-lactate is bound at residue Arg12.

It belongs to the major facilitator superfamily. Monocarboxylate porter (TC 2.A.1.13) family. Interacts with BSG; interaction mediates SLC16A1 targeting to the plasma membrane. Interacts with EMB; interaction mediates SLC16A1 targeting to the plasma membrane.

It localises to the cell membrane. The protein resides in the basolateral cell membrane. It is found in the apical cell membrane. The catalysed reaction is (S)-lactate(in) + H(+)(in) = (S)-lactate(out) + H(+)(out). The enzyme catalyses acetate(out) + H(+)(out) = acetate(in) + H(+)(in). It carries out the reaction acetoacetate(out) + H(+)(out) = acetoacetate(in) + H(+)(in). It catalyses the reaction pyruvate(out) + H(+)(out) = pyruvate(in) + H(+)(in). The catalysed reaction is (R)-3-hydroxybutanoate(out) + H(+)(out) = (R)-3-hydroxybutanoate(in) + H(+)(in). The enzyme catalyses 3-methyl-2-oxobutanoate(out) + H(+)(out) = 3-methyl-2-oxobutanoate(in) + H(+)(in). It carries out the reaction 4-methyl-2-oxopentanoate(out) + H(+)(out) = 4-methyl-2-oxopentanoate(in) + H(+)(in). It catalyses the reaction succinate(in) + 2 H(+)(in) = succinate(out) + 2 H(+)(out). Bidirectional proton-coupled monocarboxylate transporter. Catalyzes the rapid transport across the plasma membrane of many monocarboxylates such as lactate, pyruvate, acetate and the ketone bodies acetoacetate and beta-hydroxybutyrate, and thus contributes to the maintenance of intracellular pH. The transport direction is determined by the proton motive force and the concentration gradient of the substrate monocarboxylate. MCT1 is a major lactate exporter. Plays a role in cellular responses to a high-fat diet by modulating the cellular levels of lactate and pyruvate that contribute to the regulation of central metabolic pathways and insulin secretion, with concomitant effects on plasma insulin levels and blood glucose homeostasis. Facilitates the protonated monocarboxylate form of succinate export, that its transient protonation upon muscle cell acidification in exercising muscle and ischemic heart. Functions via alternate outward- and inward-open conformation states. Protonation and deprotonation is essential for the conformational transition. The polypeptide is Monocarboxylate transporter 1 (SLC16A1) (Meriones unguiculatus (Mongolian jird)).